The primary structure comprises 494 residues: 3-octaprenyl-4-hydroxybenzoate carboxy-lyase (494 aa).

Asn-172 contacts Mn(2+). Residues 175 to 177, 189 to 191, and 194 to 195 each bind prenylated FMN; these read IYR, RWL, and RG. Mn(2+) is bound at residue Glu-238. Catalysis depends on Asp-294, which acts as the Proton donor.

This sequence belongs to the UbiD family. In terms of assembly, homohexamer. Prenylated FMN serves as cofactor. Requires Mn(2+) as cofactor.

It is found in the cell membrane. The catalysed reaction is a 4-hydroxy-3-(all-trans-polyprenyl)benzoate + H(+) = a 2-(all-trans-polyprenyl)phenol + CO2. The protein operates within cofactor biosynthesis; ubiquinone biosynthesis. Catalyzes the decarboxylation of 3-octaprenyl-4-hydroxy benzoate to 2-octaprenylphenol, an intermediate step in ubiquinone biosynthesis. In Herminiimonas arsenicoxydans, this protein is 3-octaprenyl-4-hydroxybenzoate carboxy-lyase.